The chain runs to 139 residues: Large ribosomal subunit protein uL16 (139 aa).

This sequence belongs to the universal ribosomal protein uL16 family. In terms of assembly, part of the 50S ribosomal subunit.

Binds 23S rRNA and is also seen to make contacts with the A and possibly P site tRNAs. The protein is Large ribosomal subunit protein uL16 of Parvibaculum lavamentivorans (strain DS-1 / DSM 13023 / NCIMB 13966).